The primary structure comprises 344 residues: Pre-mRNA polyadenylation factor fip1 (344 aa).

Disordered regions lie at residues 1-99 (MSNA…LSTA) and 230-344 (NYNT…RNRY). The span at 28 to 38 (VTVSNAKSPEQ) shows a compositional bias: polar residues. Residues 39-50 (ASEESDDSDIEF) are compositionally biased toward acidic residues. The span at 80–92 (QVEKTAVEVKTTE) shows a compositional bias: basic and acidic residues. The segment covering 243 to 258 (SGAATPNAYVNNNPSS) has biased composition (low complexity). The span at 271–301 (NITSSAGMTHAQPTHNPTSSYGNGASTNYNA) shows a compositional bias: polar residues. Residues 302–317 (SRPPSNHPHSSNYPSS) show a composition bias toward low complexity.

It belongs to the FIP1 family.

It is found in the nucleus. In terms of biological role, pre-mRNA polyadenylation factor that directly interacts with poly(A) polymerase. This chain is Pre-mRNA polyadenylation factor fip1, found in Schizosaccharomyces pombe (strain 972 / ATCC 24843) (Fission yeast).